Consider the following 161-residue polypeptide: N5-carboxyaminoimidazole ribonucleotide mutase (161 aa).

Substrate contacts are provided by Ser-9, Asp-12, and Arg-39.

It belongs to the AIR carboxylase family. Class I subfamily.

It carries out the reaction 5-carboxyamino-1-(5-phospho-D-ribosyl)imidazole + H(+) = 5-amino-1-(5-phospho-D-ribosyl)imidazole-4-carboxylate. Its pathway is purine metabolism; IMP biosynthesis via de novo pathway; 5-amino-1-(5-phospho-D-ribosyl)imidazole-4-carboxylate from 5-amino-1-(5-phospho-D-ribosyl)imidazole (N5-CAIR route): step 2/2. In terms of biological role, catalyzes the conversion of N5-carboxyaminoimidazole ribonucleotide (N5-CAIR) to 4-carboxy-5-aminoimidazole ribonucleotide (CAIR). The chain is N5-carboxyaminoimidazole ribonucleotide mutase from Aliivibrio fischeri (strain ATCC 700601 / ES114) (Vibrio fischeri).